Reading from the N-terminus, the 110-residue chain is U1-lycotoxin-Ls1aa (110 aa).

The N-terminal stretch at Met1–Ala20 is a signal peptide. The propeptide occupies Glu21 to Arg44. Intrachain disulfides connect Cys47–Cys62, Cys54–Cys71, Cys61–Cys89, and Cys73–Cys87.

This sequence belongs to the neurotoxin 19 (CSTX) family. 03 subfamily. In terms of tissue distribution, expressed by the venom gland.

It is found in the secreted. The protein is U1-lycotoxin-Ls1aa of Lycosa singoriensis (Wolf spider).